Consider the following 275-residue polypeptide: Malonyl-[acyl-carrier protein] O-methyltransferase (275 aa).

It belongs to the methyltransferase superfamily.

The catalysed reaction is malonyl-[ACP] + S-adenosyl-L-methionine = malonyl-[ACP] methyl ester + S-adenosyl-L-homocysteine. It functions in the pathway cofactor biosynthesis; biotin biosynthesis. Functionally, converts the free carboxyl group of a malonyl-thioester to its methyl ester by transfer of a methyl group from S-adenosyl-L-methionine (SAM). It allows to synthesize pimeloyl-ACP via the fatty acid synthetic pathway. In Methylococcus capsulatus (strain ATCC 33009 / NCIMB 11132 / Bath), this protein is Malonyl-[acyl-carrier protein] O-methyltransferase.